A 484-amino-acid polypeptide reads, in one-letter code: UDP-N-acetylmuramate--L-alanine ligase (484 aa).

124-130 is an ATP binding site; it reads GTHGKTT.

It belongs to the MurCDEF family.

It localises to the cytoplasm. The catalysed reaction is UDP-N-acetyl-alpha-D-muramate + L-alanine + ATP = UDP-N-acetyl-alpha-D-muramoyl-L-alanine + ADP + phosphate + H(+). It functions in the pathway cell wall biogenesis; peptidoglycan biosynthesis. Cell wall formation. This chain is UDP-N-acetylmuramate--L-alanine ligase, found in Pseudoalteromonas atlantica (strain T6c / ATCC BAA-1087).